Consider the following 915-residue polypeptide: DNA repair-scaffolding protein (915 aa).

A compositionally biased stretch (basic residues) spans 1 to 15 (MPRGSRARGSKRKRS). 2 disordered regions span residues 1–30 (MPRG…RPLQ) and 56–114 (FQNT…EDKT). A compositionally biased stretch (polar residues) spans 56–65 (FQNTSGNPSL). Residues 67–85 (AEEKTITEKHLELCPRPKQ) show a composition bias toward basic and acidic residues. A compositionally biased stretch (polar residues) spans 86-107 (ETTTSKSTSGLTDITWSSSGSD). A necessary for interaction with RAD51 region spans residues 151–450 (EISDCASCAS…GTAWTHGHKE (300 aa)).

Found in a complex, at least composed of BLM, RAD51 and SPIDR; the complex formation is mediated by SPIDR. Interacts (via C-terminal region) with BLM; the interaction is direct. Interacts with RAD51; the interaction is direct. Interacts (via the C-terminal region) with FIGNL1 (via N-terminal one-half region); the interaction is direct.

It is found in the nucleus. Plays a role in DNA double-strand break (DBS) repair via homologous recombination (HR). Serves as a scaffolding protein that helps to promote the recruitment of DNA-processing enzymes like the helicase BLM and recombinase RAD51 to site of DNA damage, and hence contributes to maintain genomic integrity. The protein is DNA repair-scaffolding protein (SPIDR) of Homo sapiens (Human).